A 414-amino-acid chain; its full sequence is Serine hydroxymethyltransferase (414 aa).

Residues L117 and 121–123 contribute to the (6S)-5,6,7,8-tetrahydrofolate site; that span reads GHL. The residue at position 226 (K226) is an N6-(pyridoxal phosphate)lysine.

The protein belongs to the SHMT family. As to quaternary structure, homodimer. It depends on pyridoxal 5'-phosphate as a cofactor.

The protein resides in the cytoplasm. The enzyme catalyses (6R)-5,10-methylene-5,6,7,8-tetrahydrofolate + glycine + H2O = (6S)-5,6,7,8-tetrahydrofolate + L-serine. Its pathway is one-carbon metabolism; tetrahydrofolate interconversion. It functions in the pathway amino-acid biosynthesis; glycine biosynthesis; glycine from L-serine: step 1/1. Its function is as follows. Catalyzes the reversible interconversion of serine and glycine with tetrahydrofolate (THF) serving as the one-carbon carrier. This reaction serves as the major source of one-carbon groups required for the biosynthesis of purines, thymidylate, methionine, and other important biomolecules. Also exhibits THF-independent aldolase activity toward beta-hydroxyamino acids, producing glycine and aldehydes, via a retro-aldol mechanism. The sequence is that of Serine hydroxymethyltransferase from Dictyoglomus thermophilum (strain ATCC 35947 / DSM 3960 / H-6-12).